Here is a 472-residue protein sequence, read N- to C-terminus: 3-isopropylmalate dehydratase large subunit (472 aa).

The [4Fe-4S] cluster site is built by Cys347, Cys407, and Cys410.

The protein belongs to the aconitase/IPM isomerase family. LeuC type 1 subfamily. Heterodimer of LeuC and LeuD. It depends on [4Fe-4S] cluster as a cofactor.

The catalysed reaction is (2R,3S)-3-isopropylmalate = (2S)-2-isopropylmalate. The protein operates within amino-acid biosynthesis; L-leucine biosynthesis; L-leucine from 3-methyl-2-oxobutanoate: step 2/4. Its function is as follows. Catalyzes the isomerization between 2-isopropylmalate and 3-isopropylmalate, via the formation of 2-isopropylmaleate. The polypeptide is 3-isopropylmalate dehydratase large subunit (Synechococcus sp. (strain CC9902)).